Reading from the N-terminus, the 348-residue chain is Abnormal cell lineage protein 44 (348 aa).

A signal peptide spans 1-25; it reads MRAAPFDFFFQSTALSTFFILCSLA. 11 disulfide bridges follow: Cys-91-Cys-102, Cys-141-Cys-149, Cys-151-Cys-165, Cys-213-Cys-227, Cys-215-Cys-222, Cys-272-Cys-299, Cys-282-Cys-294, Cys-298-Cys-338, Cys-314-Cys-329, Cys-316-Cys-326, and Cys-321-Cys-322. The O-palmitoleoyl serine; by mom-1 moiety is linked to residue Ser-219. Asn-286 is a glycosylation site (N-linked (GlcNAc...) asparagine).

This sequence belongs to the Wnt family. Post-translationally, palmitoleoylation is required for efficient binding to frizzled receptors. Depalmitoleoylation leads to Wnt signaling pathway inhibition. In terms of tissue distribution, expressed in the tail hypodermis.

Its subcellular location is the secreted. The protein localises to the extracellular space. The protein resides in the extracellular matrix. Functionally, ligand for members of the frizzled family of seven transmembrane receptors. Affects male tail development, vulval precursor cell specification and egg laying. Involved in morphogenesis by influencing polarity of asymmetric cell divisions of the B, U, and F cells in the male, and the T cell in males and hermaphrodites. Controls spindle orientation in B-gamma cell division during male copulatory spicule development. Involved in specification of the P7.p lineage during vulval development. Has a role in providing polarity and default lin-17 localization in axon development and positioning of neuromuscular synapses in DA9 regions by negatively regulating synaptogenesis. Plays a role in motorneuron development by promoting the extension of the anterior neurite of ventral D-type GABAergic motorneurons along the anterior-posterior axis of the ventral nerve cord. Positively regulates cilium position and dendrite morphogenesis in postembryonic PQR gas-sensing neurons. This is likely through regulating the localization of grdn-1 to the distal dendrites of PQR sensory neurons. This Caenorhabditis elegans protein is Abnormal cell lineage protein 44.